Here is a 332-residue protein sequence, read N- to C-terminus: Anthranilate phosphoribosyltransferase (332 aa).

Residues Gly-79, 82–83 (GD), Ser-87, 89–92 (NIST), 107–115 (KHGNRSVSS), and Ser-119 each bind 5-phospho-alpha-D-ribose 1-diphosphate. Gly-79 contacts anthranilate. Mg(2+) is bound at residue Ser-91. Residue Asn-110 participates in anthranilate binding. Arg-165 is an anthranilate binding site. Residues Asp-223 and Glu-224 each coordinate Mg(2+).

This sequence belongs to the anthranilate phosphoribosyltransferase family. Homodimer. It depends on Mg(2+) as a cofactor.

The catalysed reaction is N-(5-phospho-beta-D-ribosyl)anthranilate + diphosphate = 5-phospho-alpha-D-ribose 1-diphosphate + anthranilate. The protein operates within amino-acid biosynthesis; L-tryptophan biosynthesis; L-tryptophan from chorismate: step 2/5. Its function is as follows. Catalyzes the transfer of the phosphoribosyl group of 5-phosphorylribose-1-pyrophosphate (PRPP) to anthranilate to yield N-(5'-phosphoribosyl)-anthranilate (PRA). This Serratia proteamaculans (strain 568) protein is Anthranilate phosphoribosyltransferase.